The sequence spans 92 residues: Beta-2-microglobulin (92 aa).

The region spanning 2–91 (PQIQVYTRHP…VSLNEPKTVI (90 aa)) is the Ig-like C1-type domain. Cys-22 and Cys-77 are oxidised to a cystine.

It belongs to the beta-2-microglobulin family. As to quaternary structure, heterodimer of an alpha chain and a beta chain. Beta-2-microglobulin is the beta-chain of major histocompatibility complex class I molecules.

The protein localises to the secreted. Its function is as follows. Component of the class I major histocompatibility complex (MHC). Involved in the presentation of peptide antigens to the immune system. This is Beta-2-microglobulin (B2m) from Mus cervicolor (Fawn-colored mouse).